We begin with the raw amino-acid sequence, 258 residues long: Lyso-ornithine lipid O-acyltransferase (258 aa).

A helical transmembrane segment spans residues 7-29; it reads LLRSARLLGLVALGLGLAAWVSL.

It belongs to the 1-acyl-sn-glycerol-3-phosphate acyltransferase family. OlsA subfamily.

The protein resides in the membrane. The enzyme catalyses a lyso-ornithine lipid + a fatty acyl-[ACP] = an N(2)-[(3R)-3-(acyloxy)acyl]-L-ornithine lipid + holo-[ACP]. Its pathway is lipid metabolism. Catalyzes the second step in the formation of ornithine lipids, which are phosphorus-free membrane lipids. Uses acyl-acyl carrier protein (acyl-AcpP) as an acyl donor and converts lyso-ornithine lipid (LOL) into ornithine lipid (OL). The protein is Lyso-ornithine lipid O-acyltransferase of Pseudomonas aeruginosa (strain ATCC 15692 / DSM 22644 / CIP 104116 / JCM 14847 / LMG 12228 / 1C / PRS 101 / PAO1).